An 87-amino-acid chain; its full sequence is Neutrophil antibiotic peptide NP-3A (87 aa).

An N-terminal signal peptide occupies residues 1–19 (MRTLTLLTTLLLLALHTQA). A propeptide spanning residues 20–58 (ESPQGSTKEAPDEEQDISVFFGGDKGTALQDAAVKAGVT) is cleaved from the precursor. Cystine bridges form between cysteine 59–cysteine 87, cysteine 61–cysteine 76, and cysteine 66–cysteine 86.

The protein belongs to the alpha-defensin family. In terms of tissue distribution, highest expression in bone marrow and to a much lesser extent in small intestine.

It localises to the secreted. Active in vitro against S.aureus, fungi, Gram-positive and Gram-negative bacteria and to a lesser extent against an enveloped virus. The chain is Neutrophil antibiotic peptide NP-3A from Rattus norvegicus (Rat).